The following is a 356-amino-acid chain: Zinc finger protein 830 (356 aa).

Residues 11 to 33 are a coiled coil; it reads AQEELRKLMKAKQRESSSKKRIE. The segment at 47–69 adopts a C2H2-type zinc-finger fold; it reads CVVCNSLIKSELLWPAHILGKQH. Residues 71–195 are disordered; sequence EKVAELKGTK…PTSSADNLPA (125 aa). Polar residues predominate over residues 80–90; sequence KATTSSPSNTI. Basic and acidic residues-rich tracts occupy residues 99-118 and 125-135; these read KGSE…EDHP and LPEEFFEKEKT. Over residues 150-165 the composition is skewed to acidic residues; it reads DYEDVDDDDAEEGEEY. Residues 278 to 322 adopt a coiled-coil conformation; sequence AEEDEEGRLDRQIDEIDEQIQCYRRVEHLRDRKDTLQDAKMEVLK.

It is found in the nucleus. The protein resides in the chromosome. It localises to the nucleus speckle. In terms of biological role, may act as an important regulator of the cell cycle that participates in the maintenance of genome integrity. This chain is Zinc finger protein 830, found in Xenopus laevis (African clawed frog).